The following is a 196-amino-acid chain: ATP-dependent Clp protease proteolytic subunit (196 aa).

Serine 98 functions as the Nucleophile in the catalytic mechanism. Histidine 123 is a catalytic residue.

This sequence belongs to the peptidase S14 family. As to quaternary structure, fourteen ClpP subunits assemble into 2 heptameric rings which stack back to back to give a disk-like structure with a central cavity, resembling the structure of eukaryotic proteasomes.

It is found in the cytoplasm. The catalysed reaction is Hydrolysis of proteins to small peptides in the presence of ATP and magnesium. alpha-casein is the usual test substrate. In the absence of ATP, only oligopeptides shorter than five residues are hydrolyzed (such as succinyl-Leu-Tyr-|-NHMec, and Leu-Tyr-Leu-|-Tyr-Trp, in which cleavage of the -Tyr-|-Leu- and -Tyr-|-Trp bonds also occurs).. Its function is as follows. Cleaves peptides in various proteins in a process that requires ATP hydrolysis. Has a chymotrypsin-like activity. Plays a major role in the degradation of misfolded proteins. The sequence is that of ATP-dependent Clp protease proteolytic subunit from Actinobacillus pleuropneumoniae serotype 7 (strain AP76).